The chain runs to 1051 residues: Serine/threonine-protein kinase ULK1 (1051 aa).

Residues 16 to 278 (FSRKDLIGHG…FDEFFHHPFL (263 aa)) enclose the Protein kinase domain. ATP contacts are provided by residues 22-30 (IGHGAFAVV) and Lys46. Asp138 functions as the Proton acceptor in the catalytic mechanism. The residue at position 162 (Lys162) is an N6-acetyllysine. Disordered regions lie at residues 283–323 (PIKK…EMPQ), 335–358 (AGFLQGSRDSGGSSKDSCDTDDFV), and 394–554 (GLES…CRLH). The segment at 287–416 (SPPVPVPSYP…TCSSSPSPSG (130 aa)) is interaction with GABARAP and GABARAPL2. Low complexity-rich tracts occupy residues 295–318 (YPSSGSGSSSSSSSASHLASPPSL), 340–349 (GSRDSGGSSK), and 400–423 (RTPSPSPTCSSSPSPSGRPGPFSS). The residue at position 317 (Ser317) is a Phosphoserine; by AMPK. A phosphoserine mark is found at Ser403 and Ser450. Residues 437 to 459 (QVHNYQRIEQNLQSPTQQQTARS) are compositionally biased toward polar residues. At Thr456 the chain carries Phosphothreonine. Phosphoserine occurs at positions 467, 477, 479, and 521. Ser555 carries the phosphoserine; by AMPK modification. Phosphothreonine is present on Thr574. Residue Lys606 is modified to N6-acetyllysine. At Thr635 the chain carries Phosphothreonine. At Ser637 the chain carries Phosphoserine; by AMPK. Ser638 is modified (phosphoserine). 2 disordered regions span residues 661 to 686 (PDLSEASPFHGQQLGSGLRPAEDTRG) and 727 to 787 (APSA…TGSS). Residues 731–745 (GFGGTLHPGARGGGA) are compositionally biased toward gly residues. Ser757 carries the phosphoserine; by MTOR modification. A Phosphoserine modification is found at Ser774. Over residues 774–787 (SVGSSSSLGSTGSS) the composition is skewed to low complexity. Position 777 is a phosphoserine; by AMPK (Ser777). The tract at residues 829 to 1051 (PDLPEETLME…LSALLSGVYA (223 aa)) is C-terminal domain; mediates interaction with SESN2.

Belongs to the protein kinase superfamily. Ser/Thr protein kinase family. APG1/unc-51/ULK1 subfamily. As to quaternary structure, interacts with GABARAP and GABARAPL2. Interacts (via C-terminus) with ATG13. Part of a complex consisting of ATG13, ATG101, ULK1 and RB1CC1. Associates with the mammalian target of rapamycin complex 1 (mTORC1) through an interaction with RPTOR; the association depends on nutrient conditions and is reduced during starvation. Interacts with FEZ1; SCOC interferes with FEZ1-binding. Interacts with TBC1D14. Interacts (phosphorylated form) with TRIM5. When phosphorylated at Ser-317, interacts with MEFV and BECN1 simultaneously. Interacts with TRIM21 and IRF3, in the presence of TRIM21. Interacts with SESN2. Interacts with SQSTM1. Interacts with C9orf72. Interacts with WDR45. Interacts with ATG13; this interaction is increased in the absence of TMEM39A. Interacts with WIPI2. Interacts with ATP2A2. Interacts with AMBRA1. Interacts with Irgm1; promoting the coassembly of ULK1 and BECN1. Autophosphorylated. Phosphorylated under nutrient-rich conditions; dephosphorylated during starvation or following treatment with rapamycin. In response to nutrient limitation, phosphorylated and activated by AMPK, leading to activate autophagy. Under nutrient sufficiency, phosphorylated by MTOR/mTOR, disrupting the interaction with AMPK and preventing activation of ULK1. Post-translationally, ubiquitinated via 'Lys-63'-linkage by a complex composed of AMBRA1 and TRAF6 following autophagy induction, promoting ULK1 stability and kinase activity. Deubiquitinated by USP20; leading to ULK1 stability and autophagy initiation. In terms of processing, acetylated by KAT5/TIP60 under autophagy induction, promoting protein kinase activity.

The protein localises to the cytoplasm. It is found in the cytosol. It localises to the preautophagosomal structure. The catalysed reaction is L-seryl-[protein] + ATP = O-phospho-L-seryl-[protein] + ADP + H(+). It catalyses the reaction L-threonyl-[protein] + ATP = O-phospho-L-threonyl-[protein] + ADP + H(+). Acetylation by KAT5/TIP60 stimulates the protein kinase activity. The protein kinase activity is activated by unanchored 'Lys-63'-linked polyubiquitin chains: unanchored 'Lys-63'-linked polyubiquitin chains are catalyzed by TRIM32 in an AMBRA1-dependent manner. In terms of biological role, serine/threonine-protein kinase involved in autophagy in response to starvation. Acts upstream of phosphatidylinositol 3-kinase PIK3C3 to regulate the formation of autophagophores, the precursors of autophagosomes. Part of regulatory feedback loops in autophagy: acts both as a downstream effector and negative regulator of mammalian target of rapamycin complex 1 (mTORC1) via interaction with RPTOR. Activated via phosphorylation by AMPK and also acts as a regulator of AMPK by mediating phosphorylation of AMPK subunits PRKAA1, PRKAB2 and PRKAG1, leading to negatively regulate AMPK activity. May phosphorylate ATG13/KIAA0652 and RPTOR; however such data need additional evidences. Plays a role early in neuronal differentiation and is required for granule cell axon formation. Also phosphorylates SESN2 and SQSTM1 to regulate autophagy. Phosphorylates FLCN, promoting autophagy. Phosphorylates AMBRA1 in response to autophagy induction, releasing AMBRA1 from the cytoskeletal docking site to induce autophagosome nucleation. Phosphorylates ATG4B, leading to inhibit autophagy by decreasing both proteolytic activation and delipidation activities of ATG4B. This is Serine/threonine-protein kinase ULK1 (Ulk1) from Mus musculus (Mouse).